The following is a 664-amino-acid chain: L-type lectin-domain containing receptor kinase I.3 (664 aa).

A signal peptide spans methionine 1–serine 21. At glutamine 22–proline 286 the chain is on the extracellular side. Positions glutamate 24–serine 257 are legume-lectin like. Asparagine 55, asparagine 125, asparagine 128, asparagine 181, asparagine 204, asparagine 225, and asparagine 267 each carry an N-linked (GlcNAc...) asparagine glycan. Residues leucine 287 to tyrosine 307 traverse the membrane as a helical segment. The Cytoplasmic portion of the chain corresponds to tryptophan 308–arginine 664. One can recognise a Protein kinase domain in the interval phenylalanine 342–phenylalanine 619. Residues valine 348–valine 356 and lysine 370 contribute to the ATP site. Aspartate 466 (proton acceptor) is an active-site residue.

The protein in the C-terminal section; belongs to the protein kinase superfamily. Ser/Thr protein kinase family. It in the N-terminal section; belongs to the leguminous lectin family. Autophosphorylated on Ser and Thr residues. In terms of tissue distribution, mostly expressed in roots and flowers, and, to a lower extent, in leaves.

It localises to the cell membrane. The enzyme catalyses L-seryl-[protein] + ATP = O-phospho-L-seryl-[protein] + ADP + H(+). It catalyses the reaction L-threonyl-[protein] + ATP = O-phospho-L-threonyl-[protein] + ADP + H(+). Involved in resistance response to the pathogenic fungus Alternaria brassicicola. This Arabidopsis thaliana (Mouse-ear cress) protein is L-type lectin-domain containing receptor kinase I.3.